Here is a 109-residue protein sequence, read N- to C-terminus: Small ribosomal subunit protein bS6 (109 aa).

Belongs to the bacterial ribosomal protein bS6 family.

Its function is as follows. Binds together with bS18 to 16S ribosomal RNA. In Ehrlichia ruminantium (strain Gardel), this protein is Small ribosomal subunit protein bS6.